Reading from the N-terminus, the 310-residue chain is Junctional adhesion molecule C (310 aa).

Positions 1–29 are cleaved as a signal peptide; it reads MALSRRLRLRLYARLPDFFLLLLFRGCMI. At 30 to 241 the chain is on the extracellular side; that stretch reads EAVNLKSSNR…GQDMEVYDLN (212 aa). The Ig-like V-type domain occupies 35 to 127; the sequence is KSSNRNPVVH…VALNDRKEVD (93 aa). Cystine bridges form between C53–C115 and C160–C219. N-linked (GlcNAc...) asparagine glycans are attached at residues N104 and N192. Residues 139-236 form the Ig-like C2-type domain; it reads PVTPVCRIPA…AARCEGQDME (98 aa). The chain crosses the membrane as a helical span at residues 242–262; that stretch reads IAGIIGGVLVVLIVLAVITMG. Residues 263 to 310 are Cytoplasmic-facing; the sequence is ICCAYRRGCFISSKQDGESYKSPGKHDGVNYIRTSEEGDFRHKSSFVI. 2 S-palmitoyl cysteine lipidation sites follow: C264 and C265.

This sequence belongs to the immunoglobulin superfamily. As to quaternary structure, interacts with ITGAM. Interacts with GORASP2. In terms of processing, proteolytically cleaved from endothelial cells surface into a soluble form by ADAM10 and ADAM17; the release of soluble JAM3 is increased by pro-inflammatory factors. N-glycosylated. Post-translationally, S-palmitoylated by ZDHHC7. S-palmitoylation promotes expression at tight junctions. As to expression, colocalizes with Jam2 near the lumen of seminiferous tubulues. Detected at junctional plaques that correspond to cell-cell contacts between spermatids and Sertoli cells. Detected on endothelial cells, in brain vessels and kidney glomeruli (at protein level). Detected in heart, lung, liver, kidney, testis, thymus, lymph node and Peyer patch. Endothelial cells.

It localises to the cell membrane. The protein localises to the cell junction. Its subcellular location is the desmosome. It is found in the tight junction. The protein resides in the secreted. Junctional adhesion protein that mediates heterotypic cell-cell interactions with its cognate receptor JAM2 to regulate different cellular processes. Plays a role in homing and mobilization of hematopoietic stem and progenitor cells within the bone marrow. At the surface of bone marrow stromal cells, it contributes to the retention of the hematopoietic stem and progenitor cells expressing JAM3. Plays a central role in leukocytes extravasation by facilitating transmigration through the endothelium. Plays a role in spermatogenesis where JAM2 and JAM3, which are respectively expressed by Sertoli and germ cells, mediate an interaction between both cell types and play an essential role in the anchorage of germ cells onto Sertoli cells and the assembly of cell polarity complexes during spermatid differentiation. Also functions as a counter-receptor for ITGAM, mediating leukocyte-platelet interactions and is involved in the regulation of transepithelial migration of polymorphonuclear neutrophils (PMN). Plays a role in angiogenesis. Plays a role in the regulation of cell migration. During myogenesis, it is involved in myocyte fusion. Its function is as follows. Promotes chemotaxis of vascular endothelial cells and stimulates angiogenesis. The sequence is that of Junctional adhesion molecule C (Jam3) from Mus musculus (Mouse).